A 90-amino-acid chain; its full sequence is Acylphosphatase (90 aa).

In terms of domain architecture, Acylphosphatase-like spans 3 to 90 (QRQFTVYGCV…RVFSDFTIER (88 aa)). Active-site residues include Arg18 and Asn36.

This sequence belongs to the acylphosphatase family.

It catalyses the reaction an acyl phosphate + H2O = a carboxylate + phosphate + H(+). In Actinobacillus succinogenes (strain ATCC 55618 / DSM 22257 / CCUG 43843 / 130Z), this protein is Acylphosphatase (acyP).